The sequence spans 157 residues: Probable intracellular pathogenesis-related protein T1 (157 aa).

N-linked (GlcNAc...) asparagine glycosylation is found at Asn-79 and Asn-117.

This sequence belongs to the BetVI family.

The polypeptide is Probable intracellular pathogenesis-related protein T1 (PCKR3) (Catharanthus roseus (Madagascar periwinkle)).